A 205-amino-acid polypeptide reads, in one-letter code: Anaerobic dimethyl sulfoxide reductase chain B (205 aa).

3 consecutive 4Fe-4S ferredoxin-type domains span residues 5 to 33, 59 to 89, and 90 to 119; these read YGFF…LTPE, FAYY…KRED, and GFVV…YNET. 16 residues coordinate [4Fe-4S] cluster: Cys-14, Cys-17, Cys-20, Cys-24, Cys-67, Cys-70, Cys-75, Cys-79, Cys-99, Cys-102, Cys-105, Cys-109, Cys-126, Cys-129, Cys-141, and Cys-145. The interval 184-205 is disordered; the sequence is KPNANSRPTGDTTGYLANPKEV. The segment covering 186 to 195 has biased composition (polar residues); it reads NANSRPTGDT.

As to quaternary structure, heterotrimeric enzyme composed of a catalytic heterodimer (DmsAB) and a membrane anchor protein (DmsC). It depends on [4Fe-4S] cluster as a cofactor.

In terms of biological role, electron transfer subunit of the terminal reductase during anaerobic growth on various sulfoxide and N-oxide compounds. In Escherichia coli (strain K12), this protein is Anaerobic dimethyl sulfoxide reductase chain B (dmsB).